The following is a 430-amino-acid chain: Adenylosuccinate synthetase (430 aa).

GTP contacts are provided by residues 13 to 19 (GDEGKGK) and 41 to 43 (GHT). The active-site Proton acceptor is the Asp14. Positions 14 and 41 each coordinate Mg(2+). IMP contacts are provided by residues 14 to 17 (DEGK), 39 to 42 (NAGH), Thr130, Arg144, Gln225, Thr240, and Arg304. Catalysis depends on His42, which acts as the Proton donor. 300 to 306 (ASTGRPR) contacts substrate. GTP-binding positions include Arg306, 332 to 334 (KLD), and 414 to 416 (STG).

This sequence belongs to the adenylosuccinate synthetase family. As to quaternary structure, homodimer. Requires Mg(2+) as cofactor.

It localises to the cytoplasm. The catalysed reaction is IMP + L-aspartate + GTP = N(6)-(1,2-dicarboxyethyl)-AMP + GDP + phosphate + 2 H(+). It participates in purine metabolism; AMP biosynthesis via de novo pathway; AMP from IMP: step 1/2. Its function is as follows. Plays an important role in the de novo pathway of purine nucleotide biosynthesis. Catalyzes the first committed step in the biosynthesis of AMP from IMP. In Xanthomonas axonopodis pv. citri (strain 306), this protein is Adenylosuccinate synthetase.